The sequence spans 407 residues: MEDTTFLEGANLAGITTLMNNLHINEQANLEELEKQVMGKQQSFPTDHFDEELNGLAKSLGINFNDPEFSLDSPHSVISKKPSGRGRDKVHGGIRRDSVCTDSICSDSVCSGSIRSGSIRSGSIRNGSIRSGSVRDDSVRSGKTRRGLACNSSSRNDRGYSLSTHRKKYAESEASQKTAFSKRDRKNHYAESEYSEKSIKPSTKQVDRLINHLRSNGDPNSFYKKDHDYERKTKLVKLEKINMLLTYLGNEQISTDDIKIPTIDSSMQEIDDVIEMLTLRNVGIRYSSIAEEILIGLARGLEIVFDGTREIPFLNYRPDYTGLHNTFMIKLFKMRYETSQVVGNLVQNMSPLSKICLELGPSLLLYPALIRTKHKASEDLYNLLQKGPEDPFTAYNEIHETLKKNNK.

Disordered stretches follow at residues 73 to 93 and 116 to 202; these read SPHS…VHGG and SGSI…IKPS. 5 repeat units span residues 112–116, 117–121, 122–126, 127–131, and 132–136. The tract at residues 112-136 is 5 X 5 AA tandem repeats of G-[S]-[IV]-R-[DNS]; that stretch reads GSIRSGSIRSGSIRNGSIRSGSVRD. Over residues 116–132 the composition is skewed to low complexity; that stretch reads SGSIRSGSIRNGSIRSG. Over residues 187–202 the composition is skewed to basic and acidic residues; sequence NHYAESEYSEKSIKPS.

The protein belongs to the asfivirus B407L family.

This is an uncharacterized protein from Ornithodoros (relapsing fever ticks).